Reading from the N-terminus, the 504-residue chain is Peroxisome proliferator-activated receptor gamma (504 aa).

Position 111 is a phosphoserine; by MAPK (serine 111). The nuclear receptor DNA-binding region spans 135–209; the sequence is AIECRVCGDK…VGMSHNAIRF (75 aa). 2 consecutive NR C4-type zinc fingers follow at residues 138-158 and 175-197; these read CRVC…CEGC and CDLN…FQKC. The interval 204–279 is interaction with FAM120B; it reads HNAIRFGRMP…DKSPFVIYDM (76 aa). Residues 237-502 enclose the NR LBD domain; that stretch reads DLRALAKHLY…HPLLQEIYKD (266 aa). Lysine 251 participates in a covalent cross-link: Glycyl lysine isopeptide (Lys-Gly) (interchain with G-Cter in ubiquitin). Residues 494 to 502 carry the 9aaTAD motif; sequence PLLQEIYKD.

The protein belongs to the nuclear hormone receptor family. NR1 subfamily. Interacts with FOXO1 (acetylated form). Heterodimer with other nuclear receptors, such as RXRA. The heterodimer with the retinoic acid receptor RXRA is called adipocyte-specific transcription factor ARF6. Interacts with NCOA6 coactivator, leading to a strong increase in transcription of target genes. Interacts with coactivator PPARBP, leading to a mild increase in transcription of target genes. Interacts with NOCA7 in a ligand-inducible manner. Interacts with NCOA1 and NCOA2 LXXLL motifs. Interacts with ASXL1, ASXL2, DNTTIP2, FAM120B, MAP2K1/MEK1, NR0B2, PDPK1, PRDM16, PRMT2 and TGFB1I1. Interacts (when activated by agonist) with PPP5C. Interacts with HELZ2 and THRAP3; the interaction stimulates the transcriptional activity of PPARG. Interacts with PER2, the interaction is ligand dependent and blocks PPARG recruitment to target promoters. Interacts with NOCT. Interacts with ACTN4. Interacts (when in the liganded conformation) with GPS2. Interacts with CRY1 and CRY2 in a ligand-dependent manner. In the absence of hormonal ligand, interacts with TACC1. In macrophages, interacts with PAQR3 and STUB1; the interactions promote PPARG poylubiquitination and STUB1-mediated degradation. Post-translationally, phosphorylated at basal conditions and dephosphorylated when treated with the ligand. May be dephosphorylated by PPP5C. The phosphorylated form may be inactive and dephosphorylation induces adipogenic activity. Ubiquitinated by E3 ubiquitin-protein ligase complex containing FBXO9; leading to proteasomal degradation. Ubiquitinated at Lys-251 by TRIM55 leading to proteasomal degradation. Ubiquitinated by E3 ubiquitin-protein ligase STUB1/CHIP; leading to proteasomal degradation. In terms of tissue distribution, highest expression in adipose tissue and lower in spleen. Very low levels in kidney, intestine, lung and muscle.

It localises to the nucleus. The protein localises to the cytoplasm. Its activity is regulated as follows. PDPK1 activates its transcriptional activity independently of its kinase activity. In terms of biological role, nuclear receptor that binds peroxisome proliferators such as hypolipidemic drugs and fatty acids. Once activated by a ligand, the nuclear receptor binds to DNA specific PPAR response elements (PPRE) and modulates the transcription of its target genes, such as acyl-CoA oxidase. It therefore controls the peroxisomal beta-oxidation pathway of fatty acids. Key regulator of adipocyte differentiation and glucose homeostasis. ARF6 acts as a key regulator of the tissue-specific adipocyte P2 (aP2) enhancer. Acts as a critical regulator of gut homeostasis by suppressing NF-kappa-B-mediated pro-inflammatory responses. Plays a role in the regulation of cardiovascular circadian rhythms by regulating the transcription of BMAL1 in the blood vessels. This chain is Peroxisome proliferator-activated receptor gamma (PPARG), found in Sus scrofa (Pig).